The sequence spans 178 residues: Adenine phosphoribosyltransferase (178 aa).

It belongs to the purine/pyrimidine phosphoribosyltransferase family. In terms of assembly, homodimer.

It is found in the cytoplasm. The catalysed reaction is AMP + diphosphate = 5-phospho-alpha-D-ribose 1-diphosphate + adenine. It functions in the pathway purine metabolism; AMP biosynthesis via salvage pathway; AMP from adenine: step 1/1. Its function is as follows. Catalyzes a salvage reaction resulting in the formation of AMP, that is energically less costly than de novo synthesis. The protein is Adenine phosphoribosyltransferase of Cereibacter sphaeroides (strain KD131 / KCTC 12085) (Rhodobacter sphaeroides).